Here is a 58-residue protein sequence, read N- to C-terminus: U8-ctenitoxin-Pk1a (58 aa).

5 cysteine pairs are disulfide-bonded: Cys-2–Cys-16, Cys-9–Cys-22, Cys-15–Cys-40, Cys-24–Cys-38, and Cys-48–Cys-55.

In terms of tissue distribution, expressed by the venom gland.

It localises to the secreted. No toxic effects on mice at dose levels of 5 ug per mouse. May be toxic to insects. The sequence is that of U8-ctenitoxin-Pk1a from Phoneutria keyserlingi (Brazilian wandering spider).